The following is a 1705-amino-acid chain: ALK tyrosine kinase receptor (1705 aa).

Positions 1 to 21 (MIARILYFFLWSAAFLPELQC) are cleaved as a signal peptide. The Extracellular segment spans residues 22–1035 (ASQRTADALT…SLSHLALGLS (1014 aa)). N-linked (GlcNAc...) asparagine glycosylation is found at asparagine 40 and asparagine 48. Positions 54-76 (RIKRKTLSVDFAVPSLLRYYLAL) are heparin-binding region. N-linked (GlcNAc...) asparagine glycosylation is found at asparagine 124, asparagine 259, asparagine 334, asparagine 434, asparagine 442, asparagine 458, asparagine 484, asparagine 578, asparagine 590, and asparagine 635. Residues 486 to 644 (SYCSFGREDC…NFTLSMECFL (159 aa)) form the MAM domain. Cysteine 694 and cysteine 707 are joined by a disulfide. The N-linked (GlcNAc...) asparagine glycan is linked to asparagine 717. A disulfide bond links cysteine 788 and cysteine 799. Asparagine 808 and asparagine 881 each carry an N-linked (GlcNAc...) asparagine glycan. The interval 842-892 (GGGRGYSSQSETPEEVMDRDPSIPGRNGKSGTAGGGGGWNDSAPVPQGGRP) is disordered. A disulfide bond links cysteine 903 and cysteine 921. N-linked (GlcNAc...) asparagine glycosylation is present at asparagine 979. 2 cysteine pairs are disulfide-bonded: cysteine 980/cysteine 988 and cysteine 983/cysteine 997. Residues 980–1016 (CSHCESGDCHETSEGMVCYCDEELTLAPDGVSCINST) form an EGF-like region. Asparagine 1014 carries N-linked (GlcNAc...) asparagine glycosylation. Residues 1036–1056 (VGTSALIAALLLAVSGVMIMY) traverse the membrane as a helical segment. At 1057–1705 (RRKHTELQSI…KMEGHNATVL (649 aa)) the chain is on the cytoplasmic side. Residues 1113–1389 (ISLTRGLGHG…IDYCLQDPDV (277 aa)) enclose the Protein kinase domain. ATP contacts are provided by residues 1119–1127 (LGHGAFGEV) and lysine 1147. Aspartate 1246 serves as the catalytic Proton acceptor. Disordered stretches follow at residues 1395 to 1499 (PVEY…GHVN), 1505 to 1524 (AHSS…WNPT), 1532 to 1557 (QQQK…GQEQ), 1588 to 1613 (QQQQ…PAPT), and 1646 to 1681 (GLPM…DSRP). Polar residues predominate over residues 1484-1493 (KPSSTTSNAQ). Low complexity-rich tracts occupy residues 1532–1544 (QQQK…AQRQ) and 1588–1602 (QQQQ…LCRP). Residues 1603–1613 (LLPPPPPPAPT) show a composition bias toward pro residues.

Belongs to the protein kinase superfamily. Tyr protein kinase family. Insulin receptor subfamily. In terms of assembly, homodimer; homodimerizes upon binding to alkal ligands (alkal1, alkal2a or alkal2b). In terms of tissue distribution, highly expressed in the developing central nervous system: highly expressed in brain, with much lower expression in heart, caudal fin and testis.

It localises to the cell membrane. It carries out the reaction L-tyrosyl-[protein] + ATP = O-phospho-L-tyrosyl-[protein] + ADP + H(+). Inhibited by ALK inhibitor TAE684. Functionally, receptor tyrosine kinase required for neurogenesis in the developing central nervous system. Following activation by alkal ligands (alkal1, alkal2a or alkal2b) at the cell surface, transduces an extracellular signal into an intracellular response. Ligand-binding to the extracellular domain induces tyrosine kinase activation, resulting in the activation of the mitogen-activated protein kinase (MAPK) pathway. Phosphorylates almost exclusively at the first tyrosine of the Y-x-x-x-Y-Y motif. The protein is ALK tyrosine kinase receptor of Danio rerio (Zebrafish).